Reading from the N-terminus, the 1075-residue chain is Nuclear factor of activated T-cells, cytoplasmic 3 (1075 aa).

T2 bears the N-acetylthreonine mark. The disordered stretch occupies residues 18–37 (FGEDGAPAPPPPGSRPADLE). Residues 109-114 (PSIQIT) form a calcineurin-binding region. Residues 205–306 (LGSPLTSPGG…PGHSPRGSVT (102 aa)) form a disordered region. Tandem repeats lie at residues 207–223 (SPLT…PGEE) and 236–252 (SPRQ…VTDE). The tract at residues 207–308 (SPLTSPGGSP…HSPRGSVTED (102 aa)) is 3 X SP repeats. Over residues 236 to 253 (SPRQSPCHSPRSSVTDEN) the composition is skewed to polar residues. The span at 256 to 270 (SPRPASGPSSRPTSP) shows a compositional bias: low complexity. The short motif at 273–275 (KRR) is the Nuclear localization signal element. The stretch at 292-308 (SPVPSPGHSPRGSVTED) is repeat 3. 2 positions are modified to phosphoserine: S344 and S372. Residues 415–596 (SSLPPLDWPL…IPVECSQRSA (182 aa)) enclose the RHD domain. The DNA-binding element occupies 444 to 451 (RAHYETEG). Positions 686 to 688 (KRK) match the Nuclear localization signal motif. 2 disordered regions span residues 711–739 (DLSS…SHDS) and 887–988 (SNTG…GLSA). Composition is skewed to polar residues over residues 724–739 (AQTQ…SHDS) and 887–912 (SNTG…QLQP). 2 stretches are compositionally biased toward low complexity: residues 916–939 (GPSH…SSPL) and 949–967 (PMPY…SPAT). Positions 970-981 (HSGQHSTQAQST) are enriched in polar residues. Residues 1032 to 1041 (TLDDVNEIIG) carry the Nuclear export signal motif. Residues 1049–1075 (VSQGAGVSRQAPLPSPESLDLGRSDGL) form a disordered region. 2 positions are modified to phosphoserine: S1063 and S1066.

As to quaternary structure, NFATC proteins bind to DNA as monomers. Member of the multicomponent NFATC transcription complex that consists of at least two components, a pre-existing cytoplasmic component NFATC2 and an inducible nuclear component NFATC1. Other members such as NFATC4, or members of the activating protein-1 family, MAF, GATA4 and Cbp/p300 can also bind the complex. Component of a promoter-binding complex composed of STAT3, NFATC3 and NFATC4; complex formation is enhanced by calcineurin. Interacts with TRIM17; this interaction prevents NFATC3 nuclear localization. Interacts with and ubiquitinated by STUB1/CHIP; HSPA1A/HSP70 is required as a co-chaperone. In terms of processing, ubiquitinated by STUB1/CHIP, leading to proteasomal degradation. Phosphorylated by NFATC-kinase; dephosphorylated by calcineurin. In terms of tissue distribution, predominantly expressed in thymus and is also found in peripheral blood leukocytes and kidney. Predominantly expressed in skeletal muscle. Also found weakly expressed in the thymus, kidney, testis, spleen, prostate, ovary, small intestine, heart, placenta and pancreas. As to expression, expressed in thymus and kidney. In terms of tissue distribution, expressed in thymus and skeletal muscle.

Its subcellular location is the cytoplasm. The protein resides in the nucleus. In terms of biological role, acts as a regulator of transcriptional activation. Binds to the TNFSF11/RANKL promoter region and promotes TNFSF11 transcription. Binding to the TNFSF11 promoter region is increased by high levels of Ca(2+) which induce NFATC3 expression and may lead to regulation of TNFSF11 expression in osteoblasts. Plays a role in promoting mesenteric arterial wall remodeling in response to the intermittent hypoxia-induced increase in EDN1 and ROCK signaling. As a result NFATC3 colocalizes with F-actin filaments, translocates to the nucleus and promotes transcription of the smooth muscle hypertrophy and differentiation marker ACTA2. Promotes lipopolysaccharide-induced apoptosis and hypertrophy in cardiomyocytes. Following JAK/STAT signaling activation and as part of a complex with NFATC4 and STAT3, binds to the alpha-beta E4 promoter region of CRYAB and activates transcription in cardiomyocytes. In conjunction with NFATC4, involved in embryonic heart development via maintenance of cardiomyocyte survival, proliferation and differentiation. Plays a role in the inducible expression of cytokine genes in T-cells, especially in the induction of the IL-2. Required for thymocyte maturation during DN3 to DN4 transition and during positive selection. Positively regulates macrophage-derived polymicrobial clearance, via binding to the promoter region and promoting transcription of NOS2 resulting in subsequent generation of nitric oxide. Involved in Ca(2+)-mediated transcriptional responses upon Ca(2+) influx via ORAI1 CRAC channels. The sequence is that of Nuclear factor of activated T-cells, cytoplasmic 3 from Homo sapiens (Human).